Reading from the N-terminus, the 344-residue chain is DNA-directed RNA polymerase subunit alpha (344 aa).

The alpha N-terminal domain (alpha-NTD) stretch occupies residues 1–239 (MADHWNKLTR…DQLQSFISFD (239 aa)). An alpha C-terminal domain (alpha-CTD) region spans residues 254 to 344 (VLPYDHNLLR…ENLSKQYSED (91 aa)).

This sequence belongs to the RNA polymerase alpha chain family. Homodimer. The RNAP catalytic core consists of 2 alpha, 1 beta, 1 beta' and 1 omega subunit. When a sigma factor is associated with the core the holoenzyme is formed, which can initiate transcription.

It carries out the reaction RNA(n) + a ribonucleoside 5'-triphosphate = RNA(n+1) + diphosphate. DNA-dependent RNA polymerase catalyzes the transcription of DNA into RNA using the four ribonucleoside triphosphates as substrates. This is DNA-directed RNA polymerase subunit alpha from Anaplasma phagocytophilum (strain HZ).